We begin with the raw amino-acid sequence, 1021 residues long: Sodium/potassium-transporting ATPase subunit alpha-1 (1021 aa).

A propeptide spanning residues 1–5 is cleaved from the precursor; sequence MGKGV. Over residues 1 to 11 the composition is skewed to basic and acidic residues; the sequence is MGKGVGRDKYE. A disordered region spans residues 1 to 36; sequence MGKGVGRDKYEPAAVSEHGDKKKAKKERDMDELKKE. The Cytoplasmic segment spans residues 6 to 85; it reads GRDKYEPAAV…NALTPPPTTP (80 aa). Lys9 is subject to N6-acetyllysine. At Tyr10 the chain carries Phosphotyrosine. A Phosphoserine; by PKC modification is found at Ser16. Lys21 carries the N6-acetyllysine modification. Positions 26 to 36 are enriched in basic and acidic residues; the sequence is KERDMDELKKE. Residues Ser38 and Ser45 each carry the phosphoserine modification. The phosphoinositide-3 kinase binding stretch occupies residues 80–82; the sequence is PPP. The helical transmembrane segment at 86–106 threads the bilayer; sequence EWVKFCRQLFGGFSMLLWIGA. Residues 107–129 are Extracellular-facing; sequence VLCFLAYGIQAATEEEPQNDNLY. Residues 130-150 traverse the membrane as a helical segment; sequence LGVVLSAVVIITGCFSYYQEA. Over 151-286 the chain is Cytoplasmic; it reads KSSKIMESFK…GGQTPIAAEI (136 aa). Phosphoserine is present on Ser226. Tyr258 bears the Phosphotyrosine mark. The chain crosses the membrane as a helical span at residues 287–306; the sequence is EHFIHIITGVAVFLGVSFFI. Topologically, residues 307-318 are extracellular; the sequence is LSLILEYTWLEA. A helical membrane pass occupies residues 319 to 336; the sequence is VIFLIGIIVANVPEGLLA. Residues 337–770 lie on the Cytoplasmic side of the membrane; that stretch reads TVTVCLTLTA…EEGRLIFDNL (434 aa). Asp374 acts as the 4-aspartylphosphate intermediate in catalysis. Residues Ser450 and Ser482 each carry the phosphoserine modification. Lys485 provides a ligand contact to ATP. The residue at position 540 (Tyr540) is a Phosphotyrosine. The segment at 594 to 715 is mediates interaction with SCN7A; it reads RAAVPDAVGK…QGAIVAVTGD (122 aa). The residue at position 666 (Ser666) is a Phosphoserine. Mg(2+) is bound by residues Asp715 and Asp719. Residues 771–790 form a helical membrane-spanning segment; it reads KKSIAYTLTSNIPEITPFLI. The Extracellular portion of the chain corresponds to 791–800; that stretch reads FIIANIPLPL. Residues 801-821 traverse the membrane as a helical segment; it reads GTVTILCIDLGTDMVPAISLA. The Cytoplasmic segment spans residues 822–841; sequence YEQAESDIMKRQPRNPQTDK. The helical transmembrane segment at 842–864 threads the bilayer; sequence LVNERLISMAYGQIGMIQALGGF. Residues 865–916 lie on the Extracellular side of the membrane; sequence FTYFVIMAENGFLPNHLLGIRVTWDDRWINDVEDSYGQQWTYEQRKIVEFTC. A helical membrane pass occupies residues 917 to 936; sequence HTAFFVSIVVVQWADLVICK. Topologically, residues 937–949 are cytoplasmic; it reads TRRNSVFQQGMKN. Ser941 is subject to Phosphoserine; by PKA. The chain crosses the membrane as a helical span at residues 950–968; the sequence is KILIFGLFEETALAAFLSY. The Extracellular segment spans residues 969–983; sequence CPGMGVALRMYPLKP. The helical transmembrane segment at 984–1004 threads the bilayer; the sequence is TWWFCAFPYSLLIFVYDEVRK. The Cytoplasmic segment spans residues 1005–1021; it reads LIIRRRPGGWVEKETYY.

Belongs to the cation transport ATPase (P-type) (TC 3.A.3) family. Type IIC subfamily. As to quaternary structure, the sodium/potassium-transporting ATPase is composed of a catalytic alpha subunit, an auxiliary non-catalytic beta subunit and an additional regulatory subunit. Interacts with regulatory subunit FXYD1. Interacts with regulatory subunit FXYD3. Interacts with SIK1. Interacts with SLC35G1 and STIM1. Interacts with CLN3; this interaction regulates the sodium/potassium-transporting ATPase complex localization at the plasma membrane. Interacts with SCN7A; activates ATP1A1 P-type sodium:potassium-exchanging transporter activity which indirectly signals to nearby neurons to regulate sodium homeostasis. Phosphorylation on Tyr-10 modulates pumping activity. Phosphorylation of Ser-941 by PKA modulates the response of ATP1A1 to PKC. Dephosphorylation by protein phosphatase 2A (PP2A) following increases in intracellular sodium, leading to increase catalytic activity.

The protein resides in the cell membrane. It localises to the basolateral cell membrane. Its subcellular location is the sarcolemma. The protein localises to the cell projection. It is found in the axon. The protein resides in the melanosome. It catalyses the reaction K(+)(out) + Na(+)(in) + ATP + H2O = K(+)(in) + Na(+)(out) + ADP + phosphate + H(+). Its activity is regulated as follows. Specifically inhibited by cardiac glycosides such as digoxin or ouabain. Functionally, this is the catalytic component of the active enzyme, which catalyzes the hydrolysis of ATP coupled with the exchange of sodium and potassium ions across the plasma membrane. This action creates the electrochemical gradient of sodium and potassium ions, providing the energy for active transport of various nutrients. Could also be part of an osmosensory signaling pathway that senses body-fluid sodium levels and controls salt intake behavior as well as voluntary water intake to regulate sodium homeostasis. The sequence is that of Sodium/potassium-transporting ATPase subunit alpha-1 (ATP1A1) from Ovis aries (Sheep).